The sequence spans 171 residues: Small ribosomal subunit protein uS5 (171 aa).

Positions 16-79 constitute an S5 DRBM domain; that stretch reads LVERLVTVDR…EAAKRNMITV (64 aa).

This sequence belongs to the universal ribosomal protein uS5 family. In terms of assembly, part of the 30S ribosomal subunit. Contacts proteins S4 and S8.

In terms of biological role, with S4 and S12 plays an important role in translational accuracy. Its function is as follows. Located at the back of the 30S subunit body where it stabilizes the conformation of the head with respect to the body. This is Small ribosomal subunit protein uS5 from Psychrobacter arcticus (strain DSM 17307 / VKM B-2377 / 273-4).